A 305-amino-acid polypeptide reads, in one-letter code: Acetaldehyde dehydrogenase (305 aa).

Residue 13–16 coordinates NAD(+); it reads SGNI. Residue cysteine 128 is the Acyl-thioester intermediate of the active site. NAD(+) is bound by residues 159–167 and asparagine 278; that span reads SAGPGTRQN.

It belongs to the acetaldehyde dehydrogenase family.

The enzyme catalyses acetaldehyde + NAD(+) + CoA = acetyl-CoA + NADH + H(+). The chain is Acetaldehyde dehydrogenase from Roseiflexus castenholzii (strain DSM 13941 / HLO8).